Here is a 188-residue protein sequence, read N- to C-terminus: dTTP/UTP pyrophosphatase (188 aa).

Catalysis depends on aspartate 70, which acts as the Proton acceptor.

The protein belongs to the Maf family. YhdE subfamily. A divalent metal cation serves as cofactor.

It is found in the cytoplasm. It carries out the reaction dTTP + H2O = dTMP + diphosphate + H(+). The catalysed reaction is UTP + H2O = UMP + diphosphate + H(+). In terms of biological role, nucleoside triphosphate pyrophosphatase that hydrolyzes dTTP and UTP. May have a dual role in cell division arrest and in preventing the incorporation of modified nucleotides into cellular nucleic acids. This chain is dTTP/UTP pyrophosphatase, found in Clostridium botulinum (strain Eklund 17B / Type B).